Reading from the N-terminus, the 78-residue chain is Probable [Fe-S]-dependent transcriptional repressor (78 aa).

Residues C56, C61, C64, and C70 each contribute to the iron-sulfur cluster site.

This sequence belongs to the FeoC family.

Its function is as follows. May function as a transcriptional regulator that controls feoABC expression. The chain is Probable [Fe-S]-dependent transcriptional repressor from Escherichia coli (strain UTI89 / UPEC).